The chain runs to 208 residues: Thymidylate kinase (208 aa).

10 to 17 (GLEGAGKS) serves as a coordination point for ATP.

This sequence belongs to the thymidylate kinase family.

The enzyme catalyses dTMP + ATP = dTDP + ADP. Functionally, phosphorylation of dTMP to form dTDP in both de novo and salvage pathways of dTTP synthesis. This Glaesserella parasuis serovar 5 (strain SH0165) (Haemophilus parasuis) protein is Thymidylate kinase.